The following is a 307-amino-acid chain: Ribosomal RNA small subunit methyltransferase H (307 aa).

S-adenosyl-L-methionine is bound by residues 33–35 (AGH), Asp-52, Leu-83, Asp-97, and Gln-104.

It belongs to the methyltransferase superfamily. RsmH family.

It is found in the cytoplasm. The catalysed reaction is cytidine(1402) in 16S rRNA + S-adenosyl-L-methionine = N(4)-methylcytidine(1402) in 16S rRNA + S-adenosyl-L-homocysteine + H(+). Its function is as follows. Specifically methylates the N4 position of cytidine in position 1402 (C1402) of 16S rRNA. The protein is Ribosomal RNA small subunit methyltransferase H of Sulfurovum sp. (strain NBC37-1).